The chain runs to 347 residues: NADH-ubiquinone oxidoreductase chain 2 (347 aa).

Transmembrane regions (helical) follow at residues 3 to 23 (PLTL…TVFS), 59 to 79 (YFLT…LNIL), 95 to 115 (PVLI…HFWV), 127 to 147 (GLIL…QISP), 149 to 169 (INPT…GWGG), 178 to 198 (ILAY…TFNP), 200 to 220 (TMVL…MMFM), 241 to 261 (VSTI…TGFI), 274 to 294 (GNII…YFYM), and 325 to 345 (LITP…ALSV).

This sequence belongs to the complex I subunit 2 family. As to quaternary structure, core subunit of respiratory chain NADH dehydrogenase (Complex I) which is composed of 45 different subunits. Interacts with TMEM242.

The protein resides in the mitochondrion inner membrane. It carries out the reaction a ubiquinone + NADH + 5 H(+)(in) = a ubiquinol + NAD(+) + 4 H(+)(out). Its function is as follows. Core subunit of the mitochondrial membrane respiratory chain NADH dehydrogenase (Complex I) which catalyzes electron transfer from NADH through the respiratory chain, using ubiquinone as an electron acceptor. Essential for the catalytic activity and assembly of complex I. In Oryctolagus cuniculus (Rabbit), this protein is NADH-ubiquinone oxidoreductase chain 2.